A 207-amino-acid chain; its full sequence is Ribosomal RNA large subunit methyltransferase E (207 aa).

The interval 1–20 (MKRDPTKGRKTPDHYARKAK) is disordered. S-adenosyl-L-methionine contacts are provided by Gly56, Trp58, Asp76, Asp94, and Asp116. Lys156 (proton acceptor) is an active-site residue.

This sequence belongs to the class I-like SAM-binding methyltransferase superfamily. RNA methyltransferase RlmE family.

It localises to the cytoplasm. It catalyses the reaction uridine(2552) in 23S rRNA + S-adenosyl-L-methionine = 2'-O-methyluridine(2552) in 23S rRNA + S-adenosyl-L-homocysteine + H(+). Its function is as follows. Specifically methylates the uridine in position 2552 of 23S rRNA at the 2'-O position of the ribose in the fully assembled 50S ribosomal subunit. In Desulfosudis oleivorans (strain DSM 6200 / JCM 39069 / Hxd3) (Desulfococcus oleovorans), this protein is Ribosomal RNA large subunit methyltransferase E.